The following is a 182-amino-acid chain: Bifunctional protein PyrR (182 aa).

The short motif at 99–111 (IVLVDDVIFTGRT) is the PRPP-binding element.

This sequence belongs to the purine/pyrimidine phosphoribosyltransferase family. PyrR subfamily. Homodimer and homohexamer; in equilibrium.

The enzyme catalyses UMP + diphosphate = 5-phospho-alpha-D-ribose 1-diphosphate + uracil. In terms of biological role, regulates transcriptional attenuation of the pyrimidine nucleotide (pyr) operon by binding in a uridine-dependent manner to specific sites on pyr mRNA. This disrupts an antiterminator hairpin in the RNA and favors formation of a downstream transcription terminator, leading to a reduced expression of downstream genes. Also displays a weak uracil phosphoribosyltransferase activity which is not physiologically significant. The polypeptide is Bifunctional protein PyrR (Caldicellulosiruptor saccharolyticus (strain ATCC 43494 / DSM 8903 / Tp8T 6331)).